Consider the following 107-residue polypeptide: Large ribosomal subunit protein P1 (107 aa).

Low complexity predominate over residues 67 to 82 (PTATSAAAAPAAGEAS). The interval 67 to 107 (PTATSAAAAPAAGEASGKAEEKKKEEPEEEGDDDMGFGLFD) is disordered. The segment covering 83–92 (GKAEEKKKEE) has biased composition (basic and acidic residues).

This sequence belongs to the eukaryotic ribosomal protein P1/P2 family. P1 and P2 exist as dimers at the large ribosomal subunit.

Plays an important role in the elongation step of protein synthesis. The polypeptide is Large ribosomal subunit protein P1 (Leishmania peruviana).